Here is a 750-residue protein sequence, read N- to C-terminus: Amyloid-beta A4 precursor protein-binding family A member 2 (750 aa).

Disordered regions lie at residues 1–94 (MAHR…PEEE) and 143–346 (DSVG…IPET). Ser11 is subject to Phosphoserine. Residues 70–80 (GDSSSDYVNNT) are compositionally biased toward polar residues. Residues 81–94 (SEEEDYDEGLPEEE) are compositionally biased toward acidic residues. An STXBP1-binding region spans residues 185-271 (HYCSSKESYQ…STEACPPSDT (87 aa)). Ser209 is modified (phosphoserine). Residues 219–228 (DLEEQEEDID) are compositionally biased toward acidic residues. 2 stretches are compositionally biased toward polar residues: residues 238–248 (LSMTSITSASE) and 332–344 (SDLNGPTDNNNIP). The PID domain occupies 367–556 (LIDGIIFAAN…IINTQEMYND (190 aa)). PDZ domains are found at residues 569-654 (ELQL…NIVS) and 660-736 (TVLI…MPAA).

As to quaternary structure, part of a multimeric complex containing STXBP1 and syntaxin-1. Binds to the cytoplasmic domain of amyloid-beta protein, and to the nuclear factor NF-kappa-B/p65 via its PDZ domain. Interacts with the N-terminal domain of NECAB3. Specifically expressed in neurons, predominantly of the cerebellum, hippocampus, and spinal cord. Lesser extent in neurons of the cerebral cortex and anterior thalmic nuclei.

Its function is as follows. Putative function in synaptic vesicle exocytosis by binding to STXBP1, an essential component of the synaptic vesicle exocytotic machinery. May modulate processing of the amyloid-beta precursor protein (APP) and hence formation of APP-beta. The protein is Amyloid-beta A4 precursor protein-binding family A member 2 (Apba2) of Mus musculus (Mouse).